A 426-amino-acid polypeptide reads, in one-letter code: Adenylosuccinate synthetase (426 aa).

GTP-binding positions include 12 to 18 (GDEGKGK) and 40 to 42 (GHT). Aspartate 13 acts as the Proton acceptor in catalysis. Positions 13 and 40 each coordinate Mg(2+). IMP is bound by residues 13–16 (DEGK), 38–41 (NAGH), threonine 125, arginine 139, glutamine 221, threonine 236, and arginine 300. Histidine 41 acts as the Proton donor in catalysis. 296–302 (TTTGRPR) is a substrate binding site. GTP contacts are provided by residues arginine 302, 328–330 (KLD), and 410–412 (AVG).

It belongs to the adenylosuccinate synthetase family. In terms of assembly, homodimer. Requires Mg(2+) as cofactor.

It localises to the cytoplasm. It carries out the reaction IMP + L-aspartate + GTP = N(6)-(1,2-dicarboxyethyl)-AMP + GDP + phosphate + 2 H(+). It participates in purine metabolism; AMP biosynthesis via de novo pathway; AMP from IMP: step 1/2. In terms of biological role, plays an important role in the de novo pathway of purine nucleotide biosynthesis. Catalyzes the first committed step in the biosynthesis of AMP from IMP. The sequence is that of Adenylosuccinate synthetase from Syntrophomonas wolfei subsp. wolfei (strain DSM 2245B / Goettingen).